Consider the following 430-residue polypeptide: Dihydrolipoyllysine-residue acetyltransferase component of pyruvate dehydrogenase complex (430 aa).

Residues 2-77 (AFEFRLPDIG…VVGDVIVKID (76 aa)) enclose the Lipoyl-binding domain. Position 43 is an N6-lipoyllysine (Lys43). The disordered stretch occupies residues 80–122 (DAEDMQFKGHDDDSSSKEEPAKEEAPAEQAPVATQTEEVDENR). A compositionally biased stretch (basic and acidic residues) spans 84-104 (MQFKGHDDDSSSKEEPAKEEA). A Peripheral subunit-binding (PSBD) domain is found at 125–162 (KAMPSVRKYAREKGVNIKAVSGSGKNGRITKEDVDAYL). The interval 164-200 (GGAPTASNESADSATNEEVAETPAAPAAVSLEGDFPE) is disordered. The span at 177–192 (ATNEEVAETPAAPAAV) shows a compositional bias: low complexity. His401 is an active-site residue.

This sequence belongs to the 2-oxoacid dehydrogenase family. As to quaternary structure, forms a 24-polypeptide structural core with octahedral symmetry. The cofactor is (R)-lipoate.

The enzyme catalyses N(6)-[(R)-dihydrolipoyl]-L-lysyl-[protein] + acetyl-CoA = N(6)-[(R)-S(8)-acetyldihydrolipoyl]-L-lysyl-[protein] + CoA. Its function is as follows. The pyruvate dehydrogenase complex catalyzes the overall conversion of pyruvate to acetyl-CoA and CO(2). It contains multiple copies of three enzymatic components: pyruvate dehydrogenase (E1), dihydrolipoamide acetyltransferase (E2) and lipoamide dehydrogenase (E3). The sequence is that of Dihydrolipoyllysine-residue acetyltransferase component of pyruvate dehydrogenase complex (pdhC) from Staphylococcus aureus.